Consider the following 205-residue polypeptide: MSAIAPGMILIAYLCGSISSAILVCRLCGLPDPRTSGSGNPGATNVLRIGGKGAAVAVLIFDVLKGMLPVWGAYELGVSPFWLGLIAIAACLGHIWPVFFGFKGGKGVATAFGAIAPISWDLTGVMAGTWLLTVLLSGYSSLGAIVSALIAPFYVWWFKPQFTFPVSMLSCLILLRHHDNIQRLWRRQETKIWTKFKRKREKDPE.

The Periplasmic portion of the chain corresponds to 1-3 (MSA). The helical transmembrane segment at 4–24 (IAPGMILIAYLCGSISSAILV) threads the bilayer. The Cytoplasmic portion of the chain corresponds to 25 to 52 (CRLCGLPDPRTSGSGNPGATNVLRIGGK). The chain crosses the membrane as a helical span at residues 53–73 (GAAVAVLIFDVLKGMLPVWGA). The Periplasmic segment spans residues 74 to 80 (YELGVSP). A helical membrane pass occupies residues 81–101 (FWLGLIAIAACLGHIWPVFFG). Over 102 to 111 (FKGGKGVATA) the chain is Cytoplasmic. A helical membrane pass occupies residues 112–132 (FGAIAPISWDLTGVMAGTWLL). Residues 133 to 137 (TVLLS) lie on the Periplasmic side of the membrane. A helical transmembrane segment spans residues 138-158 (GYSSLGAIVSALIAPFYVWWF). The Cytoplasmic segment spans residues 159–205 (KPQFTFPVSMLSCLILLRHHDNIQRLWRRQETKIWTKFKRKREKDPE).

Belongs to the PlsY family. In terms of assembly, probably interacts with PlsX.

It localises to the cell inner membrane. It catalyses the reaction sn-glycerol 3-phosphate + an acyl-CoA = a 1-acyl-sn-glycero-3-phosphate + CoA. The catalysed reaction is a fatty acyl-[ACP] + sn-glycerol 3-phosphate = a 1-acyl-sn-glycero-3-phosphate + holo-[ACP]. It functions in the pathway lipid metabolism; phospholipid metabolism. In terms of biological role, catalyzes the transfer of an acyl group from acyl-ACP to glycerol-3-phosphate (G3P) to form lysophosphatidic acid (LPA). This enzyme can also utilize acyl-CoA as fatty acyl donor, but not acyl-PO(4). This is Glycerol-3-phosphate acyltransferase from Shigella flexneri serotype 5b (strain 8401).